Reading from the N-terminus, the 172-residue chain is Putative phosphoesterase BC_1225 (172 aa).

His-34 (proton donor) is an active-site residue. 2 consecutive short sequence motifs (HXTX) follow at residues 34-37 and 115-118; these read HITL and HLTI. The Proton acceptor role is filled by His-115.

Belongs to the 2H phosphoesterase superfamily. YjcG family.

The sequence is that of Putative phosphoesterase BC_1225 from Bacillus cereus (strain ATCC 14579 / DSM 31 / CCUG 7414 / JCM 2152 / NBRC 15305 / NCIMB 9373 / NCTC 2599 / NRRL B-3711).